Consider the following 198-residue polypeptide: FMN-dependent NADH:quinone oxidoreductase (198 aa).

Residues Ser9 and 95 to 98 contribute to the FMN site; that span reads MYNF.

Belongs to the azoreductase type 1 family. As to quaternary structure, homodimer. FMN is required as a cofactor.

The catalysed reaction is 2 a quinone + NADH + H(+) = 2 a 1,4-benzosemiquinone + NAD(+). It carries out the reaction N,N-dimethyl-1,4-phenylenediamine + anthranilate + 2 NAD(+) = 2-(4-dimethylaminophenyl)diazenylbenzoate + 2 NADH + 2 H(+). Its function is as follows. Quinone reductase that provides resistance to thiol-specific stress caused by electrophilic quinones. Functionally, also exhibits azoreductase activity. Catalyzes the reductive cleavage of the azo bond in aromatic azo compounds to the corresponding amines. This Alcanivorax borkumensis (strain ATCC 700651 / DSM 11573 / NCIMB 13689 / SK2) protein is FMN-dependent NADH:quinone oxidoreductase.